A 375-amino-acid chain; its full sequence is Serine protease 23 (375 aa).

A signal peptide spans 1–23; sequence MAGTPGHPIFLLLLLRAIGQVSP. Asparagine 93 carries N-linked (GlcNAc...) asparagine glycosylation. A disulfide bond links cysteine 153 and cysteine 169. Histidine 168 functions as the Charge relay system in the catalytic mechanism. Asparagine 199 carries N-linked (GlcNAc...) asparagine glycosylation. Residues aspartate 232 and serine 308 each act as charge relay system in the active site.

It belongs to the peptidase S1 family.

The protein resides in the secreted. The protein is Serine protease 23 (PRSS23) of Bos taurus (Bovine).